The chain runs to 379 residues: Nucleosome assembly protein 1;2 (379 aa).

Residues 26-80 (VNALKNKLQNLAGQHSDVLENLTPPVRKRVEFLREIQNQYDEMEAKFFEERAALE) are a coiled coil. S41 is subject to Phosphoserine. Residues 47–62 (LTPPVRKRVEFLREIQ) carry the Nuclear export signal motif. The Nuclear localization signal signature appears at 222 to 227 (KKKPKK). The segment at 298–379 (AVEADDLDIE…GERPPECKQQ (82 aa)) is disordered. Residues 299–342 (VEADDLDIEDDDDEIDEDDDEEDEEDDEDDEEEDDEDDDEEEEA) are compositionally biased toward acidic residues. Residues 347-360 (KSKKKSSAGHKKAG) show a composition bias toward basic residues. Position 376 is a cysteine methyl ester (C376). Residue C376 is the site of S-farnesyl cysteine attachment. The propeptide at 377–379 (KQQ) is removed in mature form.

It belongs to the nucleosome assembly protein (NAP) family. Can form homomeric and heteromeric protein complexes with NAP1;1, NAP1;3 and NAP1;4. Binds histone H2A. In terms of tissue distribution, ubiquitous.

It localises to the nucleus. The protein localises to the cytoplasm. May modulate chromatin structure by regulation of nucleosome assembly/disassembly. May function in nucleotide excision repair (NER). Involved in somatic homologous recombination. The protein is Nucleosome assembly protein 1;2 (NAP1;2) of Arabidopsis thaliana (Mouse-ear cress).